A 353-amino-acid polypeptide reads, in one-letter code: Quinolinate synthase (353 aa).

Iminosuccinate-binding residues include histidine 47 and serine 68. [4Fe-4S] cluster is bound at residue cysteine 113. Iminosuccinate-binding positions include 139-141 (YAN) and serine 156. Cysteine 200 is a binding site for [4Fe-4S] cluster. Iminosuccinate contacts are provided by residues 226–228 (HPE) and threonine 243. Position 297 (cysteine 297) interacts with [4Fe-4S] cluster.

It belongs to the quinolinate synthase family. Type 1 subfamily. It depends on [4Fe-4S] cluster as a cofactor.

It is found in the cytoplasm. It carries out the reaction iminosuccinate + dihydroxyacetone phosphate = quinolinate + phosphate + 2 H2O + H(+). Its pathway is cofactor biosynthesis; NAD(+) biosynthesis; quinolinate from iminoaspartate: step 1/1. In terms of biological role, catalyzes the condensation of iminoaspartate with dihydroxyacetone phosphate to form quinolinate. This is Quinolinate synthase from Vibrio campbellii (strain ATCC BAA-1116).